The following is a 350-amino-acid chain: UDP-glucose 4-epimerase (350 aa).

Residues 13 to 15 (GYI), 34 to 38 (DNLCN), 67 to 68 (DI), F89, and K93 each bind NAD(+). 133-135 (SAT) contributes to the substrate binding site. Y158 acts as the Proton acceptor in catalysis. 2 residues coordinate NAD(+): K162 and Y186. Substrate-binding positions include 186–188 (YFN), 207–209 (NNL), 225–227 (SVY), R240, and 303–306 (RSGD).

Belongs to the NAD(P)-dependent epimerase/dehydratase family. In terms of assembly, homodimer. NAD(+) serves as cofactor.

It carries out the reaction UDP-alpha-D-glucose = UDP-alpha-D-galactose. The catalysed reaction is UDP-N-acetyl-alpha-D-glucosamine = UDP-N-acetyl-alpha-D-galactosamine. It participates in carbohydrate metabolism; galactose metabolism. Its function is as follows. Catalyzes two distinct but analogous reactions: the reversible epimerization of UDP-glucose to UDP-galactose and the reversible epimerization of UDP-N-acetylglucosamine to UDP-N-acetylgalactosamine. The reaction with UDP-Gal plays a critical role in the Leloir pathway of galactose catabolism in which galactose is converted to the glycolytic intermediate glucose 6-phosphate. It contributes to the catabolism of dietary galactose and enables the endogenous biosynthesis of both UDP-Gal and UDP-GalNAc when exogenous sources are limited. Both UDP-sugar interconversions are important in the synthesis of glycoproteins and glycolipids. In Drosophila melanogaster (Fruit fly), this protein is UDP-glucose 4-epimerase (Gale).